The following is a 267-amino-acid chain: Putative metal-binding protein TM_0123 (267 aa).

The N-terminal stretch at 1–15 (MKKILLLLVLIVAVL) is a signal peptide. The a divalent metal cation site is built by His-53, His-107, and His-172.

Belongs to the bacterial solute-binding protein 9 family.

The protein resides in the periplasm. Functionally, part of an ATP-binding cassette (ABC) transport system involved in metal import. Binds a metal with high affinity and specificity and delivers it to the membrane permease for translocation into the cytoplasm. The protein is Putative metal-binding protein TM_0123 of Thermotoga maritima (strain ATCC 43589 / DSM 3109 / JCM 10099 / NBRC 100826 / MSB8).